Here is a 226-residue protein sequence, read N- to C-terminus: UPF0758 protein GWCH70_2550 (226 aa).

The MPN domain maps to 104–226 (VIRSPEDGAK…FVSLKEKGYV (123 aa)). Zn(2+)-binding residues include H175, H177, and D188. Positions 175–188 (HNHPSGDPTPSRED) match the JAMM motif motif.

It belongs to the UPF0758 family.

This is UPF0758 protein GWCH70_2550 from Geobacillus sp. (strain WCH70).